Reading from the N-terminus, the 270-residue chain is Type III pantothenate kinase (270 aa).

ATP is bound at residue 19-26 (DIGNTSTT). Residues Tyr-109 and 116–119 (GADR) contribute to the substrate site. The active-site Proton acceptor is the Asp-118. Residue Asp-139 coordinates K(+). Thr-142 provides a ligand contact to ATP. Residue Thr-194 coordinates substrate.

The protein belongs to the type III pantothenate kinase family. Homodimer. It depends on NH4(+) as a cofactor. K(+) is required as a cofactor.

Its subcellular location is the cytoplasm. The enzyme catalyses (R)-pantothenate + ATP = (R)-4'-phosphopantothenate + ADP + H(+). Its pathway is cofactor biosynthesis; coenzyme A biosynthesis; CoA from (R)-pantothenate: step 1/5. In terms of biological role, catalyzes the phosphorylation of pantothenate (Pan), the first step in CoA biosynthesis. The sequence is that of Type III pantothenate kinase from Chlorobaculum tepidum (strain ATCC 49652 / DSM 12025 / NBRC 103806 / TLS) (Chlorobium tepidum).